The following is a 287-amino-acid chain: Protease HtpX (287 aa).

2 consecutive transmembrane segments (helical) span residues 4–24 (IFLL…VMSI) and 33–53 (SGLL…SLAI). H139 provides a ligand contact to Zn(2+). E140 is an active-site residue. H143 contacts Zn(2+). The next 2 helical transmembrane spans lie at 154–174 (LIQG…AGII) and 195–215 (AVVF…VAYF). Position 220 (E220) interacts with Zn(2+).

Belongs to the peptidase M48B family. Zn(2+) serves as cofactor.

The protein resides in the cell inner membrane. In Shewanella piezotolerans (strain WP3 / JCM 13877), this protein is Protease HtpX.